The chain runs to 395 residues: ATP phosphoribosyltransferase regulatory subunit (395 aa).

It belongs to the class-II aminoacyl-tRNA synthetase family. HisZ subfamily. In terms of assembly, heteromultimer composed of HisG and HisZ subunits.

It is found in the cytoplasm. It participates in amino-acid biosynthesis; L-histidine biosynthesis; L-histidine from 5-phospho-alpha-D-ribose 1-diphosphate: step 1/9. Its function is as follows. Required for the first step of histidine biosynthesis. May allow the feedback regulation of ATP phosphoribosyltransferase activity by histidine. This is ATP phosphoribosyltransferase regulatory subunit from Pseudomonas savastanoi pv. phaseolicola (strain 1448A / Race 6) (Pseudomonas syringae pv. phaseolicola (strain 1448A / Race 6)).